The primary structure comprises 179 residues: Small ribosomal subunit protein uS5 (179 aa).

An S5 DRBM domain is found at 22 to 85 (MIEKLVAVNR…EYARKRMANV (64 aa)).

Belongs to the universal ribosomal protein uS5 family. As to quaternary structure, part of the 30S ribosomal subunit. Contacts proteins S4 and S8.

Its function is as follows. With S4 and S12 plays an important role in translational accuracy. Located at the back of the 30S subunit body where it stabilizes the conformation of the head with respect to the body. The chain is Small ribosomal subunit protein uS5 from Xylella fastidiosa (strain M12).